A 911-amino-acid polypeptide reads, in one-letter code: MDGAMGPRGLLLCMYLVSLLILQAMPALGSATGRSKSSEKRQAVDTAVDGVFIRSLKVNCKVTSRFAHYVVTSQVVNTANEAREVAFDLEIPKTAFISDFAVTADGNAFIGDIKDKVTAWKQYRKAAISGENAGLVRASGRTMEQFTIHLTVNPQSKVTFQLTYEEVLKRNHMQYEIVIKVKPKQLVHHFEIDVDIFEPQGISKLDAQASFLPKELAAQTIKKSFSGKKGHVLFRPTVSQQQSCPTCSTSLLNGHFKVTYDVSRDKICDLLVANNHFAHFFAPQNLTNMNKNVVFVIDISGSMRGQKVKQTKEALLKILGDMQPGDYFDLVLFGTRVQSWKGSLVQASEANLQAAQDFVRGFSLDEATNLNGGLLRGIEILNQVQESLPELSNHASILIMLTDGDPTEGVTDRSQILKNVRNAIRGRFPLYNLGFGHNVDFNFLEVMSMENNGRAQRIYEDHDATQQLQGFYSQVAKPLLVDVDLQYPQDAVLALTQNHHKQYYEGSEIVVAGRIADNKQSSFKADVQAHGEGQEFSITCLVDEEEMKKLLRERGHMLENHVERLWAYLTIQELLAKRMKVDREERANLSSQALQMSLDYGFVTPLTSMSIRGMADQDGLKPTIDKPSEDSPPLEMLGPRRTFVLSALQPSPTHSSSNTQRLPDRVTGVDTDPHFIIHVPQKEDTLCFNINEEPGVILSLVQDPNTGFSVNGQLIGNKARSPGQHDGTYFGRLGIANPATDFQLEVTPQNITLNPGFGGPVFSWRDQAVLRQDGVVVTINKKRNLVVSVDDGGTFEVVLHRVWKGSSVHQDFLGFYVLDSHRMSARTHGLLGQFFHPIGFEVSDIHPGSDPTKPDATMVVRNRRLTVTRGLQKDYSKDPWHGAEVSCWFIHNNGAGLIDGAYTDYIVPDIF.

The first 27 residues, 1–27, serve as a signal peptide directing secretion; sequence MDGAMGPRGLLLCMYLVSLLILQAMPA. A propeptide spanning residues 28-34 is cleaved from the precursor; the sequence is LGSATGR. A VIT domain is found at 37–166; the sequence is SSEKRQAVDT…KVTFQLTYEE (130 aa). C60 carries an S-linked (Hex...) cysteine glycan. At S129 the chain carries Phosphoserine. The Phagocytosis uptake signal signature appears at 181–184; it reads VKPK. 2 disulfides stabilise this stretch: C244–C247 and C268–C540. A glycan (N-linked (GlcNAc...) (complex) asparagine) is linked at N285. The region spanning 290 to 450 is the VWFA domain; that stretch reads NKNVVFVIDI…FNFLEVMSME (161 aa). Residues 387–911 form a hyaluronan-binding region; it reads SLPELSNHAS…YTDYIVPDIF (525 aa). Phosphothreonine is present on residues T402 and T407. N588 carries an N-linked (GlcNAc...) (complex) asparagine glycan. Residue T653 is glycosylated (O-linked (GalNAc...) threonine). D672 carries the aspartate 1-(chondroitin 4-sulfate)-ester modification. A propeptide spanning residues 673–911 is cleaved from the precursor; the sequence is PHFIIHVPQK…YTDYIVPDIF (239 aa). N750 carries N-linked (GlcNAc...) asparagine glycosylation.

It belongs to the ITIH family. As to quaternary structure, I-alpha-I plasma protease inhibitors are assembled from one or two heavy chains (HC) and one light chain, bikunin. Inter-alpha-inhibitor (I-alpha-I) is composed of ITIH1/HC1, ITIH2/HC2 and bikunin. Interacts with TNFAIP6 (via Link and CUB domains). Post-translationally, heavy chains are linked to bikunin via chondroitin 4-sulfate esterified to the alpha-carboxyl of the C-terminal aspartate after propeptide cleavage. The S-linked glycan is composed of two 6-carbon sugars, possibly Glc or Gal.

The protein resides in the secreted. May act as a carrier of hyaluronan in serum or as a binding protein between hyaluronan and other matrix protein, including those on cell surfaces in tissues to regulate the localization, synthesis and degradation of hyaluronan which are essential to cells undergoing biological processes. Its function is as follows. Contains a potential peptide which could stimulate a broad spectrum of phagocytotic cells. The sequence is that of Inter-alpha-trypsin inhibitor heavy chain H1 (ITIH1) from Homo sapiens (Human).